The sequence spans 285 residues: Transcription factor LBX1 (285 aa).

The segment covering 1–20 (MTSKEDGKAAPGEERRRSPL) has biased composition (basic and acidic residues). Residues 1 to 36 (MTSKEDGKAAPGEERRRSPLDHLPPPANSNKPLTPF) are disordered. A DNA-binding region (homeobox) is located at residues 125–184 (RRKSRTAFTNHQIYELEKRFLYQKYLSPADRDQIAQQLGLTNAQVITWFQNRRAKLKRDL). The disordered stretch occupies residues 212–285 (EQNSEASGGG…EEDEEIDVDD (74 aa)). Over residues 218–230 (SGGGGGGGGGGCG) the composition is skewed to gly residues. Acidic residues predominate over residues 272-285 (CSEDEEDEEIDVDD).

Interacts with SKOR1 which acts as a transcriptional corepressor.

The protein resides in the nucleus. In terms of biological role, transcription factor required for the development of GABAergic interneurons in the dorsal horn of the spinal cord and migration and further development of hypaxial muscle precursor cells for limb muscles, diaphragm and hypoglossal cord. The protein is Transcription factor LBX1 of Rattus norvegicus (Rat).